Reading from the N-terminus, the 120-residue chain is MDDSKVVGGKVKKPGKRGRKPAKIDLKAKLERSRQSARECRARKKLRYQYLEELVSSRERAICALREELEMYKQWCMAMDQGKIPSEIKALLTGEEQNKSQQNSSRHTKAGKTDANSNSW.

The interval 1 to 24 (MDDSKVVGGKVKKPGKRGRKPAKI) is disordered. Positions 10 to 21 (KVKKPGKRGRKP) are enriched in basic residues. A bZIP domain is found at 23-86 (KIDLKAKLER…MAMDQGKIPS (64 aa)). The interval 29 to 60 (KLERSRQSARECRARKKLRYQYLEELVSSRER) is basic motif. A leucine-zipper region spans residues 62–69 (ICALREEL). A disordered region spans residues 93–120 (TGEEQNKSQQNSSRHTKAGKTDANSNSW).

Belongs to the bZIP family. ATF subfamily. Interacts with CREB1; regulates CREB1 phosphorylation, stability and transcriptional activity. In terms of processing, phosphorylated by AMPK.

The protein localises to the nucleus. Its function is as follows. Probable regulator of CREB1 transcriptional activity which is involved in adipose cells differentiation. May also play a regulatory role in the cell cycle. Identification in a chromosomal region frequently deleted in various cancers suggests that it might act as a tumor suppressor. The chain is cAMP-responsive element-binding protein-like 2 (CREBL2) from Homo sapiens (Human).